Consider the following 302-residue polypeptide: GTPase Era (302 aa).

Residues 4–171 (KAGFVALVGR…KEKIVSLLPE (168 aa)) enclose the Era-type G domain. Residues 12-19 (GRTNVGKS) form a G1 region. 12–19 (GRTNVGKS) contacts GTP. The tract at residues 38-42 (QTTRN) is G2. The tract at residues 59 to 62 (DTPG) is G3. GTP contacts are provided by residues 59–63 (DTPGI) and 121–124 (NKID). Residues 121-124 (NKID) form a G4 region. Positions 150–152 (ISA) are G5. Residues 202–280 (LEEEVPHGVY…FLDLWVKTRK (79 aa)) enclose the KH type-2 domain.

This sequence belongs to the TRAFAC class TrmE-Era-EngA-EngB-Septin-like GTPase superfamily. Era GTPase family. Monomer.

The protein resides in the cytoplasm. The protein localises to the cell membrane. Its function is as follows. An essential GTPase that binds both GDP and GTP, with rapid nucleotide exchange. Plays a role in 16S rRNA processing and 30S ribosomal subunit biogenesis and possibly also in cell cycle regulation and energy metabolism. The sequence is that of GTPase Era from Thermoanaerobacter pseudethanolicus (strain ATCC 33223 / 39E) (Clostridium thermohydrosulfuricum).